We begin with the raw amino-acid sequence, 661 residues long: mRNA 3'-end-processing protein RNA14 (661 aa).

A disordered region spans residues 1-29 (MSDGTATPDPLPSSSNTSTSLRPTSRVRD). The segment covering 12–24 (PSSSNTSTSLRPT) has biased composition (low complexity). HAT repeat units lie at residues 62–94 (KQWK…LEFD), 99–133 (LDAA…YVRK), 143–179 (EARN…FLEH), 190–223 (QRVQ…WEQD), 264–296 (TLNQ…WESD), and 305–337 (LHKA…YQGE).

It is found in the nucleus. The protein localises to the cytoplasm. Its function is as follows. Component of the cleavage factor IA (CFIA) complex, which is involved in the endonucleolytic cleavage during polyadenylation-dependent pre-mRNA 3'-end formation. In Kluyveromyces lactis (strain ATCC 8585 / CBS 2359 / DSM 70799 / NBRC 1267 / NRRL Y-1140 / WM37) (Yeast), this protein is mRNA 3'-end-processing protein RNA14 (RNA14).